The primary structure comprises 74 residues: MVKNYSFYQFIMTVRGRKDDKGVFAEQIFEDLAFPKHEDDFNTLSEYIETHSEFTLPMSVFDDLYDDYTEWLKF.

It belongs to the UPF0346 family.

In Staphylococcus epidermidis (strain ATCC 12228 / FDA PCI 1200), this protein is UPF0346 protein SE_1114.